A 90-amino-acid polypeptide reads, in one-letter code: Envelope protein US9 homolog (90 aa).

Residues 1-63 (MEPLRLADAE…IRRRRRQTRA (63 aa)) lie on the Intravirion side of the membrane. Positions 12 to 13 (LL) match the Di-leucine internalization motif motif. The tract at residues 29–38 (EAYYTESDDE) is acidic. Residues 64 to 84 (AGFVAAFVLVALISGGLGALM) traverse the membrane as a helical; Signal-anchor for type II membrane protein segment. At 85 to 90 (CWLAYR) the chain is on the virion surface side.

The protein belongs to the alphaherpesvirinae envelope protein US9 family. In terms of processing, phosphorylated on serines within the acidic cluster. Phosphorylation determines whether endocytosed viral US9 traffics to the trans-Golgi network or recycles to the cell membrane.

The protein resides in the virion membrane. It is found in the host Golgi apparatus membrane. Its subcellular location is the host smooth endoplasmic reticulum membrane. The protein localises to the host cell membrane. In terms of biological role, essential for the anterograde spread of the infection throughout the host nervous system. Together with the gE/gI heterodimer, US9 is involved in the sorting and transport of viral structural components toward axon tips. This is Envelope protein US9 homolog from Cercopithecine herpesvirus 1 (CeHV-1).